We begin with the raw amino-acid sequence, 286 residues long: Bifunctional protein FolD (286 aa).

Residues 166-168 (GRS) and serine 191 contribute to the NADP(+) site.

Belongs to the tetrahydrofolate dehydrogenase/cyclohydrolase family. In terms of assembly, homodimer.

The catalysed reaction is (6R)-5,10-methylene-5,6,7,8-tetrahydrofolate + NADP(+) = (6R)-5,10-methenyltetrahydrofolate + NADPH. It catalyses the reaction (6R)-5,10-methenyltetrahydrofolate + H2O = (6R)-10-formyltetrahydrofolate + H(+). Its pathway is one-carbon metabolism; tetrahydrofolate interconversion. Functionally, catalyzes the oxidation of 5,10-methylenetetrahydrofolate to 5,10-methenyltetrahydrofolate and then the hydrolysis of 5,10-methenyltetrahydrofolate to 10-formyltetrahydrofolate. This chain is Bifunctional protein FolD, found in Lactiplantibacillus plantarum (strain ATCC BAA-793 / NCIMB 8826 / WCFS1) (Lactobacillus plantarum).